The primary structure comprises 154 residues: CASP-like protein ARALYDRAFT_485429 (154 aa).

The Cytoplasmic segment spans residues 1 to 12 (MENVPGSFGTSA). The chain crosses the membrane as a helical span at residues 13-33 (SFALRFGQTIFSAASLIFMCF). Topologically, residues 34-41 (DYDFYDFT) are extracellular. Residues 42-62 (TFCYLATVMAIVTPWSILLAL) form a helical membrane-spanning segment. The Cytoplasmic portion of the chain corresponds to 63–81 (TDTYSVLVKLLPQELRVLS). The chain crosses the membrane as a helical span at residues 82 to 102 (IVFAGDFVLSFLSLGGACAVA). Residues 103–128 (SATELLASADGKICDGNLCIQYQVSA) lie on the Extracellular side of the membrane. Residues 129–149 (ALAFLCWFLLLASALFNFWSL) form a helical membrane-spanning segment. The Cytoplasmic segment spans residues 150–154 (PSLYY).

Belongs to the Casparian strip membrane proteins (CASP) family. As to quaternary structure, homodimer and heterodimers.

The protein localises to the cell membrane. The polypeptide is CASP-like protein ARALYDRAFT_485429 (Arabidopsis lyrata subsp. lyrata (Lyre-leaved rock-cress)).